The primary structure comprises 477 residues: Acetolactate synthase small subunit 2, chloroplastic (477 aa).

The transit peptide at 1–53 (MAATTTATSLFSSRLHFQNQNQGYGFPAKTPNSLQVNQIIDGRKMRNATVLSA) directs the protein to the chloroplast. 2 ACT domains span residues 78-150 (TISV…DLSK) and 309-383 (TLSL…NITH). L-valine-binding residues include D85, I89, I90, N103, I104, N316, V320, L321, N334, and I335.

This sequence belongs to the acetolactate synthase small subunit family. In terms of assembly, the acetolactate synthase complex contains 4 homodimers of the large catalytic subunits, and 1 homotetramer of the small regulatory subunits. As to expression, expressed in roots in the vascular tissuem in cells around the quiescent center, in floral organs at the tips of young siliques and in the joint region between the silique and the pedicel. Barely detectable in mature leaves or siliques.

The protein resides in the plastid. Its subcellular location is the chloroplast. It localises to the peroxisome. It participates in amino-acid biosynthesis; L-isoleucine biosynthesis; L-isoleucine from 2-oxobutanoate: step 1/4. It functions in the pathway amino-acid biosynthesis; L-valine biosynthesis; L-valine from pyruvate: step 1/4. Its function is as follows. Regulatory subunit of acetohydroxy-acid synthase. Involved in the feed-back inhibition by branched-chain amino acids but not in herbicide tolerance. May play a role in valine and isoleucine-mediated feedback inhibition in roots. In vitro, inhibited by valine, but not leucine or isoleucine. Required for reproductive development and sodium homeostasis. The chain is Acetolactate synthase small subunit 2, chloroplastic from Arabidopsis thaliana (Mouse-ear cress).